A 138-amino-acid chain; its full sequence is 1,4-dihydroxy-2-naphthoyl-CoA hydrolase (138 aa).

Residue Asp14 is part of the active site.

The protein belongs to the 4-hydroxybenzoyl-CoA thioesterase family. DHNA-CoA hydrolase subfamily.

It carries out the reaction 1,4-dihydroxy-2-naphthoyl-CoA + H2O = 1,4-dihydroxy-2-naphthoate + CoA + H(+). It functions in the pathway cofactor biosynthesis; phylloquinone biosynthesis. The protein operates within quinol/quinone metabolism; 1,4-dihydroxy-2-naphthoate biosynthesis; 1,4-dihydroxy-2-naphthoate from chorismate: step 7/7. Catalyzes the hydrolysis of 1,4-dihydroxy-2-naphthoyl-CoA (DHNA-CoA) to 1,4-dihydroxy-2-naphthoate (DHNA), a reaction involved in phylloquinone (vitamin K1) biosynthesis. The chain is 1,4-dihydroxy-2-naphthoyl-CoA hydrolase from Rippkaea orientalis (strain PCC 8801 / RF-1) (Cyanothece sp. (strain PCC 8801)).